A 209-amino-acid chain; its full sequence is Potassium-transporting ATPase KdpC subunit (209 aa).

Residues 10–30 (VISLVFLFVLGFLFPTVTSLI) form a helical membrane-spanning segment.

This sequence belongs to the KdpC family. In terms of assembly, the system is composed of three essential subunits: KdpA, KdpB and KdpC.

Its subcellular location is the cell membrane. In terms of biological role, part of the high-affinity ATP-driven potassium transport (or Kdp) system, which catalyzes the hydrolysis of ATP coupled with the electrogenic transport of potassium into the cytoplasm. This subunit acts as a catalytic chaperone that increases the ATP-binding affinity of the ATP-hydrolyzing subunit KdpB by the formation of a transient KdpB/KdpC/ATP ternary complex. The polypeptide is Potassium-transporting ATPase KdpC subunit (Thermoplasma volcanium (strain ATCC 51530 / DSM 4299 / JCM 9571 / NBRC 15438 / GSS1)).